The primary structure comprises 565 residues: Adenine deaminase 1 (565 aa).

The protein belongs to the metallo-dependent hydrolases superfamily. Adenine deaminase family. It depends on Mn(2+) as a cofactor.

The enzyme catalyses adenine + H2O + H(+) = hypoxanthine + NH4(+). In Rhizobium meliloti (strain 1021) (Ensifer meliloti), this protein is Adenine deaminase 1.